The chain runs to 211 residues: Phosphoribosyl-dephospho-CoA transferase (211 aa).

Residues Asp-136 and Asp-138 contribute to the active site.

The protein belongs to the MdcG family.

It carries out the reaction apo-[malonate decarboxylase ACP] + 2'-(5''-triphospho-alpha-D-ribosyl)-3'-dephospho-CoA = holo-[malonate decarboxylase ACP] + diphosphate. Its function is as follows. Transfers 2'-(5-triphosphoribosyl)-3'-dephosphocoenzyme-A to the apo-[acyl-carrier-protein] of the malonate decarboxylase to yield holo-[acyl-carrier-protein]. In Pseudomonas syringae pv. tomato (strain ATCC BAA-871 / DC3000), this protein is Phosphoribosyl-dephospho-CoA transferase.